The chain runs to 24 residues: Cupiennin-5a (24 aa).

As to expression, expressed by the venom gland.

It localises to the secreted. This is Cupiennin-5a from Cupiennius salei (American wandering spider).